The primary structure comprises 366 residues: Peptide chain release factor 2 (366 aa).

Q251 carries the post-translational modification N5-methylglutamine.

The protein belongs to the prokaryotic/mitochondrial release factor family. Post-translationally, methylated by PrmC. Methylation increases the termination efficiency of RF2.

It localises to the cytoplasm. Its function is as follows. Peptide chain release factor 2 directs the termination of translation in response to the peptide chain termination codons UGA and UAA. The sequence is that of Peptide chain release factor 2 (prfB) from Listeria monocytogenes serotype 4b (strain F2365).